The chain runs to 151 residues: Differentiation-associated protein 2 (151 aa).

A signal peptide spans 1–22 (MKQIIRLITTLLLLSLIGITCA).

The protein localises to the endoplasmic reticulum. Its subcellular location is the vacuole. In terms of biological role, has an essential role in the initiation of differentiation. Also required for cAMP signaling. The polypeptide is Differentiation-associated protein 2 (dia2) (Dictyostelium discoideum (Social amoeba)).